A 441-amino-acid polypeptide reads, in one-letter code: Gluconate 2-dehydrogenase cytochrome c subunit (441 aa).

A signal peptide spans 1-19 (MMKSILALVLGTLSFAALA). Cytochrome c domains lie at 26-129 (ALVK…MHGV), 173-289 (PVLA…KSLG), and 312-403 (DDSQ…RGSW). 9 residues coordinate heme c: Cys-40, Cys-43, His-44, Cys-188, Cys-191, His-192, Cys-325, Cys-328, and His-329.

Heterotrimer. It depends on FAD as a cofactor. In terms of processing, binds 3 heme c groupd covalently per subunit.

Its subcellular location is the cell membrane. It carries out the reaction D-gluconate + A = 2-dehydro-D-gluconate + AH2. Functionally, part of the heterotrimer that catalyzes the conversion of D-gluconate to 2-dehydro-D-gluconate. In Pantoea cypripedii (Pectobacterium cypripedii), this protein is Gluconate 2-dehydrogenase cytochrome c subunit.